Here is a 101-residue protein sequence, read N- to C-terminus: Protein RnfH (101 aa).

The protein belongs to the UPF0125 (RnfH) family.

The polypeptide is Protein RnfH (Coxiella burnetii (strain CbuG_Q212) (Coxiella burnetii (strain Q212))).